The sequence spans 802 residues: Leucine--tRNA ligase (802 aa).

A 'HIGH' region motif is present at residues 40-51 (PYPSGAGLHVGH). The short motif at 576-580 (KMSKS) is the 'KMSKS' region element. K579 provides a ligand contact to ATP.

The protein belongs to the class-I aminoacyl-tRNA synthetase family.

The protein localises to the cytoplasm. The catalysed reaction is tRNA(Leu) + L-leucine + ATP = L-leucyl-tRNA(Leu) + AMP + diphosphate. This Bacillus cereus (strain ATCC 14579 / DSM 31 / CCUG 7414 / JCM 2152 / NBRC 15305 / NCIMB 9373 / NCTC 2599 / NRRL B-3711) protein is Leucine--tRNA ligase.